We begin with the raw amino-acid sequence, 2596 residues long: Protein unc-79 homolog (2596 aa).

Ser-754 and Ser-758 each carry phosphoserine. Disordered regions lie at residues Gly-907–Ser-931, Ser-1539–Glu-1573, Val-1594–Ser-1632, Glu-1648–Ser-1679, Lys-1695–Gln-1832, and Leu-1863–Gln-1909. Basic and acidic residues predominate over residues Val-1594–Leu-1606. Positions Gly-1662–Ser-1679 are enriched in low complexity. The segment covering Asn-1704 to Ser-1713 has biased composition (polar residues). A compositionally biased stretch (basic and acidic residues) spans Glu-1726 to Glu-1735. Polar residues predominate over residues Glu-1897–Ile-1908. Helical transmembrane passes span Leu-2184–Gly-2204 and Cys-2426–Tyr-2446.

It belongs to the unc-79 family. In terms of assembly, NALCN complex consists of NALCN and auxiliary subunits, UNC79, UNC80 and NACL1. These auxiliary subunits are essential for the NALCN channel function. UNC80 bridges NALCN to UNC79. Interacts with NALCN. Interacts with UNC80.

The protein localises to the cell membrane. Auxiliary subunit of the NALCN sodium channel complex. The NALCN sodium channel complex is a voltage-gated ion channel responsible for the resting Na(+) permeability that controls neuronal excitability. Activated by neuropeptides substance P, neurotensin, and extracellular calcium that regulates neuronal excitability by controlling the sizes of NALCN-dependent sodium-leak current. This chain is Protein unc-79 homolog (Unc79), found in Mus musculus (Mouse).